Here is a 214-residue protein sequence, read N- to C-terminus: Neuromodulin (214 aa).

Positions 1–214 (MLCCMRRTKQ…EEAKPDQENA (214 aa)) are disordered. Residues C3 and C4 are each lipidated (S-palmitoyl cysteine). Composition is skewed to basic and acidic residues over residues 9–33 (KQVE…DKAH), 52–88 (MKDD…KTEE), and 95–122 (LEVK…KDTP). An IQ domain is found at 32 to 61 (AHKAATKIQASFRGHIIRKKMKDDKKDDNS). The segment covering 124–133 (EENQASAESE) has biased composition (low complexity). Basic and acidic residues-rich tracts occupy residues 150–160 (QAKEESKKADV), 168–193 (ASEK…EIKA), and 205–214 (EEAKPDQENA).

The protein belongs to the neuromodulin family. In terms of assembly, binds calmodulin with a greater affinity in the absence of Ca(2+) than in its presence. Post-translationally, palmitoylated. Palmitoylation is essential for plasma membrane association.

It localises to the cell membrane. The protein localises to the cell projection. Its subcellular location is the growth cone membrane. It is found in the synapse. The protein resides in the filopodium membrane. This protein is associated with nerve growth. It is a major component of the motile 'growth cones' that form the tips of elongating axons. Plays a role in axonal and dendritic filopodia induction. The polypeptide is Neuromodulin (gap43) (Xenopus laevis (African clawed frog)).